The following is a 470-amino-acid chain: Zinc finger protein pat-9 (470 aa).

The interval 1-25 is disordered; it reads MENRTPMQHHSGYEIVKSEPPSTPK. 3 consecutive C2H2-type zinc fingers follow at residues 84–106, 112–134, and 140–162; these read YPCN…QNSH, FECD…KRIH, and FVCT…KDMH. The tract at residues 191-235 is disordered; sequence MEQEENGGLPASSSASSVISHPLITTTSGNKKRSKAAKAKQTPSS. Residues 221 to 230 carry the Nuclear localization signal motif; sequence KKRSKAAKAK.

The protein belongs to the krueppel C2H2-type zinc-finger protein family. As to expression, expressed in body wall muscle and gonad (at protein level).

The protein resides in the nucleus. The protein localises to the chromosome. Its function is as follows. Probable transcription factor; required for proper organization of muscle myofilaments and for their recruitment to the M line. This Caenorhabditis elegans protein is Zinc finger protein pat-9.